Consider the following 261-residue polypeptide: Calcium-binding protein 8 (261 aa).

Residues 1 to 41 form a disordered region; sequence MRLPEQPGDGKPENETKGDQETPERGEEPRRSPAPDFPTWE. Residues 1–234 lie on the Cytoplasmic side of the membrane; the sequence is MRLPEQPGDG…QNRQTCVRKS (234 aa). Residues 8 to 33 show a composition bias toward basic and acidic residues; sequence GDGKPENETKGDQETPERGEEPRRSP. EF-hand domains follow at residues 78-113 and 114-149; these read EELDEIREAFRVLDRDGNGFISKQELGMAMRSLGYM and PSEVELAIIMQRLDMDGDGQVDFDEFMTILGPKLVS. Positions 91, 93, 95, 102, 127, 129, 131, 133, and 138 each coordinate Ca(2+). The helical; Anchor for type IV membrane protein transmembrane segment at 235-255 threads the bilayer; sequence LICAFAMAFIISVMLIAANQI. At 256 to 261 the chain is on the extracellular side; that stretch reads LRSGME.

Interacts with PI4KB. This binding competes with FREQ/NCS1 binding in a calcium-dependent manner. In terms of tissue distribution, brain-specific. High expression in the cerebellum, hippocampus, and cortex.

It is found in the golgi apparatus. The protein resides in the trans-Golgi network membrane. It localises to the cytoplasm. The protein localises to the perinuclear region. Its subcellular location is the cell membrane. Its function is as follows. Negatively regulates Golgi-to-plasma membrane trafficking by interacting with PI4KB and inhibiting its activity. May play a role in the physiology of neurons and is potentially important in memory and learning. The polypeptide is Calcium-binding protein 8 (Caln1) (Mus musculus (Mouse)).